Reading from the N-terminus, the 307-residue chain is Ribosomal RNA small subunit methyltransferase A (307 aa).

S-adenosyl-L-methionine is bound by residues Asn35, Val37, Gly62, Glu83, Asp113, and Asn136.

Belongs to the class I-like SAM-binding methyltransferase superfamily. rRNA adenine N(6)-methyltransferase family. RsmA subfamily.

The protein resides in the cytoplasm. It catalyses the reaction adenosine(1518)/adenosine(1519) in 16S rRNA + 4 S-adenosyl-L-methionine = N(6)-dimethyladenosine(1518)/N(6)-dimethyladenosine(1519) in 16S rRNA + 4 S-adenosyl-L-homocysteine + 4 H(+). Its function is as follows. Specifically dimethylates two adjacent adenosines (A1518 and A1519) in the loop of a conserved hairpin near the 3'-end of 16S rRNA in the 30S particle. May play a critical role in biogenesis of 30S subunits. This chain is Ribosomal RNA small subunit methyltransferase A, found in Bifidobacterium longum (strain DJO10A).